The primary structure comprises 211 residues: Uracil phosphoribosyltransferase (211 aa).

Residues Arg79, Arg104, and 131–139 (DPMLATGGS) each bind 5-phospho-alpha-D-ribose 1-diphosphate. Residues Ile196 and 201–203 (GDA) contribute to the uracil site. Asp202 is a binding site for 5-phospho-alpha-D-ribose 1-diphosphate.

Belongs to the UPRTase family. The cofactor is Mg(2+).

The enzyme catalyses UMP + diphosphate = 5-phospho-alpha-D-ribose 1-diphosphate + uracil. It functions in the pathway pyrimidine metabolism; UMP biosynthesis via salvage pathway; UMP from uracil: step 1/1. Its activity is regulated as follows. Allosterically activated by GTP. In terms of biological role, catalyzes the conversion of uracil and 5-phospho-alpha-D-ribose 1-diphosphate (PRPP) to UMP and diphosphate. In Lactococcus lactis subsp. cremoris (strain SK11), this protein is Uracil phosphoribosyltransferase.